A 225-amino-acid chain; its full sequence is Ribonuclease HII (225 aa).

Residues 35 to 225 (GLVAGVDEVG…SFRPCQISPD (191 aa)) form the RNase H type-2 domain. A divalent metal cation is bound by residues Asp-41, Glu-42, and Asp-137.

Belongs to the RNase HII family. It depends on Mn(2+) as a cofactor. The cofactor is Mg(2+).

It is found in the cytoplasm. It catalyses the reaction Endonucleolytic cleavage to 5'-phosphomonoester.. Functionally, endonuclease that specifically degrades the RNA of RNA-DNA hybrids. This Nostoc sp. (strain PCC 7120 / SAG 25.82 / UTEX 2576) protein is Ribonuclease HII.